The chain runs to 84 residues: Small ribosomal subunit protein uS17 (84 aa).

The protein belongs to the universal ribosomal protein uS17 family. In terms of assembly, part of the 30S ribosomal subunit.

One of the primary rRNA binding proteins, it binds specifically to the 5'-end of 16S ribosomal RNA. The protein is Small ribosomal subunit protein uS17 of Clostridium botulinum (strain Alaska E43 / Type E3).